Reading from the N-terminus, the 500-residue chain is NAD(P)H-quinone oxidoreductase chain 4, chloroplastic (500 aa).

The next 15 membrane-spanning stretches (helical) occupy residues 4-24 (FPWL…MLFL), 35-55 (YTIC…CYNF), 87-107 (IGTI…AFPV), 113-130 (LFHF…GSFS), 134-154 (LLLF…LLAM), 167-187 (FILY…GISL), 211-231 (ILFY…IPLH), 242-262 (HYST…YGLV), 272-292 (AHSM…IYAA), 305-325 (IAYS…SITD), 330-350 (GAIL…FLAG), 364-384 (MGGM…LSMA), 386-406 (LALP…GIIT), 411-431 (FLIF…LTPI), and 462-482 (LFLS…PDFV).

Belongs to the complex I subunit 4 family.

The protein localises to the plastid. Its subcellular location is the chloroplast thylakoid membrane. It catalyses the reaction a plastoquinone + NADH + (n+1) H(+)(in) = a plastoquinol + NAD(+) + n H(+)(out). The catalysed reaction is a plastoquinone + NADPH + (n+1) H(+)(in) = a plastoquinol + NADP(+) + n H(+)(out). In Capsella bursa-pastoris (Shepherd's purse), this protein is NAD(P)H-quinone oxidoreductase chain 4, chloroplastic.